The sequence spans 188 residues: Probable DNA-directed RNA polymerase subunit delta (188 aa).

The HTH HARE-type domain occupies 14–83; that stretch reads LSMIEVARAI…GENKWGLRSW (70 aa). Residues 119 to 188 are disordered; sequence EDAIDYSADD…EDEEDEDEEE (70 aa).

This sequence belongs to the RpoE family. As to quaternary structure, RNAP is composed of a core of 2 alpha, a beta and a beta' subunits. The core is associated with a delta subunit and one of several sigma factors.

Functionally, participates in both the initiation and recycling phases of transcription. In the presence of the delta subunit, RNAP displays an increased specificity of transcription, a decreased affinity for nucleic acids, and an increased efficiency of RNA synthesis because of enhanced recycling. The chain is Probable DNA-directed RNA polymerase subunit delta from Streptococcus equi subsp. zooepidemicus (strain H70).